The primary structure comprises 709 residues: Probable serine/threonine-protein kinase zyg-1 (709 aa).

The region spanning 13–251 (FQNLQQIGQG…LKEIVMTDYV (239 aa)) is the Protein kinase domain. Residues 19–27 (IGQGGFGVV) and Lys41 each bind ATP. Asp130 functions as the Proton acceptor in the catalytic mechanism. Disordered stretches follow at residues 254 to 329 (KMGE…DRAR) and 591 to 633 (SSSQ…PAAT). 2 stretches are compositionally biased toward basic and acidic residues: residues 262-291 (SREH…ERRP) and 302-313 (SRRDPDGYRAAH). A compositionally biased stretch (polar residues) spans 607-627 (PLSSRTTSSLNVRNGVSSDEN).

Belongs to the protein kinase superfamily. Ser/Thr protein kinase family.

It is found in the cytoplasm. The protein localises to the cytoskeleton. It localises to the microtubule organizing center. Its subcellular location is the centrosome. The protein resides in the centriole. The catalysed reaction is L-seryl-[protein] + ATP = O-phospho-L-seryl-[protein] + ADP + H(+). The enzyme catalyses L-threonyl-[protein] + ATP = O-phospho-L-threonyl-[protein] + ADP + H(+). In terms of biological role, protein kinase that plays a central role in centrosome duplication. Paternal copy is required to regulate synthesis of daughter centrioles prior to fertilization. Maternal copy regulates centrosome duplication during later cell cycles. Functions upstream of sas-5 and sas-6, and is required for their localization to the centrosome. The polypeptide is Probable serine/threonine-protein kinase zyg-1 (zyg-1) (Caenorhabditis briggsae).